Consider the following 159-residue polypeptide: Transcription elongation factor GreA (159 aa).

Belongs to the GreA/GreB family.

Functionally, necessary for efficient RNA polymerase transcription elongation past template-encoded arresting sites. The arresting sites in DNA have the property of trapping a certain fraction of elongating RNA polymerases that pass through, resulting in locked ternary complexes. Cleavage of the nascent transcript by cleavage factors such as GreA or GreB allows the resumption of elongation from the new 3'terminus. GreA releases sequences of 2 to 3 nucleotides. This Orientia tsutsugamushi (strain Ikeda) (Rickettsia tsutsugamushi) protein is Transcription elongation factor GreA.